A 381-amino-acid chain; its full sequence is Alkanesulfonate monooxygenase (381 aa).

It belongs to the SsuD family. Homotetramer.

It carries out the reaction an alkanesulfonate + FMNH2 + O2 = an aldehyde + FMN + sulfite + H2O + 2 H(+). In terms of biological role, catalyzes the desulfonation of aliphatic sulfonates. The chain is Alkanesulfonate monooxygenase from Shigella flexneri serotype 5b (strain 8401).